The sequence spans 214 residues: Probable transaldolase (214 aa).

The active-site Schiff-base intermediate with substrate is Lys-83.

This sequence belongs to the transaldolase family. Type 3B subfamily.

The protein localises to the cytoplasm. It carries out the reaction D-sedoheptulose 7-phosphate + D-glyceraldehyde 3-phosphate = D-erythrose 4-phosphate + beta-D-fructose 6-phosphate. Its pathway is carbohydrate degradation; pentose phosphate pathway; D-glyceraldehyde 3-phosphate and beta-D-fructose 6-phosphate from D-ribose 5-phosphate and D-xylulose 5-phosphate (non-oxidative stage): step 2/3. In terms of biological role, transaldolase is important for the balance of metabolites in the pentose-phosphate pathway. This chain is Probable transaldolase, found in Geobacter sulfurreducens (strain ATCC 51573 / DSM 12127 / PCA).